We begin with the raw amino-acid sequence, 150 residues long: UPF0208 membrane protein VP2081 (150 aa).

2 helical membrane passes run 42–62 (FGIKVMPAVAAISVLTQMAFN) and 70–90 (SIVVALFAISLPLQGIWWLGA).

It belongs to the UPF0208 family.

It localises to the cell inner membrane. In Vibrio parahaemolyticus serotype O3:K6 (strain RIMD 2210633), this protein is UPF0208 membrane protein VP2081.